The chain runs to 166 residues: Putative lipoprotein Lxx21020 (166 aa).

An N-terminal signal peptide occupies residues 1 to 22 (MTKTTRLLRATTVAAILLGLTG). The N-palmitoyl cysteine moiety is linked to residue cysteine 23. Cysteine 23 is lipidated: S-diacylglycerol cysteine.

It localises to the cell membrane. The polypeptide is Putative lipoprotein Lxx21020 (Leifsonia xyli subsp. xyli (strain CTCB07)).